A 102-amino-acid chain; its full sequence is uncharacterized protein (102 aa).

Residues 79–102 (AELLHPSPAPMPPATHGRSAAPCS) are disordered.

This is an uncharacterized protein from Homo sapiens (Human).